The chain runs to 91 residues: CRISPR-associated endoribonuclease Cas2 2 (91 aa).

D8 contributes to the Mg(2+) binding site.

The protein belongs to the CRISPR-associated endoribonuclease Cas2 protein family. In terms of assembly, homodimer, forms a heterotetramer with a Cas1 homodimer. It depends on Mg(2+) as a cofactor.

Functionally, CRISPR (clustered regularly interspaced short palindromic repeat), is an adaptive immune system that provides protection against mobile genetic elements (viruses, transposable elements and conjugative plasmids). CRISPR clusters contain sequences complementary to antecedent mobile elements and target invading nucleic acids. CRISPR clusters are transcribed and processed into CRISPR RNA (crRNA). Functions as a ssRNA-specific endoribonuclease. Involved in the integration of spacer DNA into the CRISPR cassette. This Pyrobaculum aerophilum (strain ATCC 51768 / DSM 7523 / JCM 9630 / CIP 104966 / NBRC 100827 / IM2) protein is CRISPR-associated endoribonuclease Cas2 2.